The sequence spans 392 residues: Ribosomal RNA large subunit methyltransferase G (392 aa).

Belongs to the methyltransferase superfamily. RlmG family.

Its subcellular location is the cytoplasm. The enzyme catalyses guanosine(1835) in 23S rRNA + S-adenosyl-L-methionine = N(2)-methylguanosine(1835) in 23S rRNA + S-adenosyl-L-homocysteine + H(+). Functionally, specifically methylates the guanine in position 1835 (m2G1835) of 23S rRNA. This chain is Ribosomal RNA large subunit methyltransferase G, found in Shewanella frigidimarina (strain NCIMB 400).